Consider the following 81-residue polypeptide: uncharacterized protein (81 aa).

The first 20 residues, 1–20 (MIDDHEALLLLVLSSGPAAL), serve as a signal peptide directing secretion.

This is an uncharacterized protein from Treponema pallidum (strain Nichols).